The chain runs to 622 residues: MQTRYMERTNSMREKRKLEEDDNQQQQQQPERKRPALASVIVEALKMDSLQRLCSSLEPILRRVVSEEVERALAKLGPARLSERSSPKRIEGIGGRNLQLQFRSRLSVPLFTGGKIEGEQGAAIHVVLLDMTTGHVLTVGPEASAKLDVVVLDGDFNTEDDDGWSGEEFEGHLVKERQGKRPLLTGDVQVTLKEGVGTLGELIFTDNSSWIRCRKFRLGLRVSSGYCEGMRVREAKTEAFTVKDHRGELYKKHYPPALDDEVWRLEKIGKDGAFHKKLNKAGIYNVKEFLRLMVKDSQKLRTILGSGMSNRMWETLAEHSKTCVLSEMLYVYYPEDSVGVVFNNIYEFSGLISGKQYYPADSLSDNQKGYVDGLVRKAYENWEQVIEYDSKSLMNFNQVSKTDDIDYSMPVSVPSQPSTSYSDVTVEAYNQSPASSFPGQSQLADTTYMHFGNSSFAPQDQLVNNTHESQSMINSNGGVRLALGPATGSQNQEQLVHPPPEINSYNDWSNTCNRGVDGFLSEEEIRARSNEMLENDDMQQLLRLFSMNGGDQQTPLNMGEDSFGFHSFGQTSMADYEEDRSNSGKAVVGWLKIKAAMRWGFFIRRKAAQRRAQIVQLDEDDE.

The segment covering 1 to 19 has biased composition (basic and acidic residues); sequence MQTRYMERTNSMREKRKLE. The tract at residues 1–35 is disordered; sequence MQTRYMERTNSMREKRKLEEDDNQQQQQQPERKRP. The calmodulin-binding stretch occupies residues 10–89; that stretch reads NSMREKRKLE…RLSERSSPKR (80 aa). The tract at residues 159 to 282 is DNA-binding; it reads EDDDGWSGEE…AFHKKLNKAG (124 aa).

This sequence belongs to the plant ACBP60 protein family. As to quaternary structure, interacts with calmodulin (CaM). As to expression, expressed in stems, flowers and root.

Its subcellular location is the nucleus. Transcription activator that binds DNA in a sequence-specific manner, likely 5'-GAAATTTTGG-3', to promote the expression of target genes. The chain is Calmodulin-binding protein 60 C from Arabidopsis thaliana (Mouse-ear cress).